A 355-amino-acid chain; its full sequence is UDP-N-acetylglucosamine--N-acetylmuramyl-(pentapeptide) pyrophosphoryl-undecaprenol N-acetylglucosamine transferase (355 aa).

Residues 15 to 17, N127, R163, S191, I244, 263 to 268, and Q288 contribute to the UDP-N-acetyl-alpha-D-glucosamine site; these read TGG and ALTVSE.

Belongs to the glycosyltransferase 28 family. MurG subfamily.

The protein localises to the cell inner membrane. It carries out the reaction di-trans,octa-cis-undecaprenyl diphospho-N-acetyl-alpha-D-muramoyl-L-alanyl-D-glutamyl-meso-2,6-diaminopimeloyl-D-alanyl-D-alanine + UDP-N-acetyl-alpha-D-glucosamine = di-trans,octa-cis-undecaprenyl diphospho-[N-acetyl-alpha-D-glucosaminyl-(1-&gt;4)]-N-acetyl-alpha-D-muramoyl-L-alanyl-D-glutamyl-meso-2,6-diaminopimeloyl-D-alanyl-D-alanine + UDP + H(+). It functions in the pathway cell wall biogenesis; peptidoglycan biosynthesis. In terms of biological role, cell wall formation. Catalyzes the transfer of a GlcNAc subunit on undecaprenyl-pyrophosphoryl-MurNAc-pentapeptide (lipid intermediate I) to form undecaprenyl-pyrophosphoryl-MurNAc-(pentapeptide)GlcNAc (lipid intermediate II). This is UDP-N-acetylglucosamine--N-acetylmuramyl-(pentapeptide) pyrophosphoryl-undecaprenol N-acetylglucosamine transferase from Salmonella enteritidis PT4 (strain P125109).